The primary structure comprises 115 residues: 5-hydroxyisourate hydrolase (115 aa).

The segment at 1 to 23 (MSGLTTHILDQASGKPAAGVGVR) is disordered. Substrate contacts are provided by histidine 7, arginine 45, and tyrosine 112.

It belongs to the transthyretin family. 5-hydroxyisourate hydrolase subfamily. In terms of assembly, homotetramer.

It catalyses the reaction 5-hydroxyisourate + H2O = 5-hydroxy-2-oxo-4-ureido-2,5-dihydro-1H-imidazole-5-carboxylate + H(+). Functionally, catalyzes the hydrolysis of 5-hydroxyisourate (HIU) to 2-oxo-4-hydroxy-4-carboxy-5-ureidoimidazoline (OHCU). This chain is 5-hydroxyisourate hydrolase, found in Caulobacter vibrioides (strain ATCC 19089 / CIP 103742 / CB 15) (Caulobacter crescentus).